The chain runs to 610 residues: Zinc metalloproteinase-disintegrin-like 4a (610 aa).

The first 20 residues, 1 to 20 (MIQVLLVTISLAVFPYQGSS), serve as a signal peptide directing secretion. The propeptide occupies 21–189 (VILESGNVND…KKASQSNLTP (169 aa)). The Peptidase M12B domain maps to 199 to 395 (KYVKLFLVAD…NMPQCILKKP (197 aa)). An N-linked (GlcNAc...) asparagine glycan is attached at asparagine 218. Aspartate 286 is a Ca(2+) binding site. Disulfide bonds link cysteine 310/cysteine 390, cysteine 350/cysteine 374, and cysteine 352/cysteine 357. Zn(2+) is bound at residue histidine 335. The active site involves glutamate 336. Zn(2+) contacts are provided by histidine 339 and histidine 345. Ca(2+) contacts are provided by cysteine 390, valine 405, asparagine 408, phenylalanine 410, glutamate 412, glutamate 415, and aspartate 418. Residues 403 to 488 (PAVCGNYFVE…AECTDSFQRN (86 aa)) form the Disintegrin domain. 14 disulfide bridges follow: cysteine 406-cysteine 435, cysteine 417-cysteine 430, cysteine 419-cysteine 425, cysteine 429-cysteine 452, cysteine 443-cysteine 449, cysteine 448-cysteine 474, cysteine 461-cysteine 481, cysteine 468-cysteine 499, cysteine 492-cysteine 504, cysteine 511-cysteine 561, cysteine 526-cysteine 572, cysteine 539-cysteine 549, cysteine 556-cysteine 598, and cysteine 592-cysteine 603. The short motif at 467-469 (ECD) is the D/ECD-tripeptide element.

Belongs to the venom metalloproteinase (M12B) family. P-III subfamily. It depends on Zn(2+) as a cofactor. As to expression, expressed by the venom gland.

The protein localises to the secreted. Snake venom metalloproteinase that impairs hemostasis in the envenomed animal. This chain is Zinc metalloproteinase-disintegrin-like 4a, found in Crotalus adamanteus (Eastern diamondback rattlesnake).